Reading from the N-terminus, the 864-residue chain is Leucine--tRNA ligase (864 aa).

The short motif at 42–52 is the 'HIGH' region element; sequence PYPSGKLHMGH. A 'KMSKS' region motif is present at residues 624 to 628; sequence KMSKS. Lys-627 contacts ATP.

Belongs to the class-I aminoacyl-tRNA synthetase family.

It is found in the cytoplasm. It catalyses the reaction tRNA(Leu) + L-leucine + ATP = L-leucyl-tRNA(Leu) + AMP + diphosphate. This is Leucine--tRNA ligase from Burkholderia cenocepacia (strain ATCC BAA-245 / DSM 16553 / LMG 16656 / NCTC 13227 / J2315 / CF5610) (Burkholderia cepacia (strain J2315)).